We begin with the raw amino-acid sequence, 61 residues long: Photosystem II reaction center X protein (61 aa).

Residues isoleucine 26 to phenylalanine 46 form a helical membrane-spanning segment.

It belongs to the PsbX family. Type 2 subfamily. In terms of assembly, PSII consists of a core antenna complex that captures photons, and an electron transfer chain that converts photonic excitation into a charge separation. PSII forms dimeric complexes.

The protein resides in the cellular thylakoid membrane. Its function is as follows. Involved in the binding and/or turnover of quinones at the Q(B) site of Photosystem II. This chain is Photosystem II reaction center X protein, found in Prochlorococcus marinus (strain MIT 9312).